Reading from the N-terminus, the 229-residue chain is Large ribosomal subunit protein uL1 (229 aa).

This sequence belongs to the universal ribosomal protein uL1 family. Part of the 50S ribosomal subunit.

Functionally, binds directly to 23S rRNA. The L1 stalk is quite mobile in the ribosome, and is involved in E site tRNA release. In terms of biological role, protein L1 is also a translational repressor protein, it controls the translation of the L11 operon by binding to its mRNA. The polypeptide is Large ribosomal subunit protein uL1 (Caulobacter sp. (strain K31)).